Consider the following 742-residue polypeptide: Two-component response regulator-like PRR37 (742 aa).

Residues Lys63–Trp181 form the Response regulatory domain. Low complexity predominate over residues Ser186–Gly195. Disordered regions lie at residues Ser186–Lys249, Pro290–Asn346, Gln377–Asn402, Met478–Arg517, Phe533–Gln568, Asn590–Met671, and Asn697–Arg742. Over residues Asp236–Thr248 the composition is skewed to polar residues. Positions Lys299 to Glu313 are enriched in basic and acidic residues. The segment covering Arg318–Glu330 has biased composition (polar residues). Positions Arg331–Glu341 are enriched in basic and acidic residues. Residues Gly490–Ser502 show a composition bias toward low complexity. The span at Thr503 to Ser512 shows a compositional bias: polar residues. Over residues Asn618–Ser634 the composition is skewed to low complexity. Over residues Gly656–Ser667 the composition is skewed to gly residues. In terms of domain architecture, CCT spans Arg682–Gln724. Positions Asn697–Lys708 are enriched in basic residues. The segment covering Gly719–Gln731 has biased composition (low complexity).

This sequence belongs to the ARR-like family.

Its subcellular location is the nucleus. Probable transcription factor involved in the regulation of flowering time under long day (LD) conditions. Functions as a repressor of flowering. Controls flowering time by negatively regulating the expression of HD3A. Acts downstream of the phytochrome B to repress the expression of EHD1, an activator of the flowering promoter genes HD3A and RFT1. Controls photoperiodic flowering response. Seems to be one of the component of the circadian clock. Expression of several members of the ARR-like family is controlled by circadian rhythm. The particular coordinated sequential expression of PRR73, PRR37, PRR95, PRR59 and PPR1 result to circadian waves that may be at the basis of the endogenous circadian clock. The protein is Two-component response regulator-like PRR37 of Oryza sativa subsp. japonica (Rice).